The sequence spans 206 residues: Large ribosomal subunit protein eL13z (206 aa).

The segment at 183–206 (ERTNKRHAGARAKRAADAEKEEKK) is disordered. A compositionally biased stretch (basic residues) spans 186 to 195 (NKRHAGARAK). The segment covering 196 to 206 (RAADAEKEEKK) has biased composition (basic and acidic residues).

This sequence belongs to the eukaryotic ribosomal protein eL13 family.

The chain is Large ribosomal subunit protein eL13z from Brassica napus (Rape).